Here is a 362-residue protein sequence, read N- to C-terminus: Phospho-N-acetylmuramoyl-pentapeptide-transferase (362 aa).

Transmembrane regions (helical) follow at residues 18–38, 73–93, 97–117, 134–154, 160–180, 200–220, 237–257, 264–284, 289–309, and 339–359; these read VFGY…AISL, TMGG…WGDL, YVWV…VDDW, YFWT…SATT, LIVP…FIAL, GLAI…AYVA, AGEL…FLWF, VFMG…IAVV, IVLF…MVQV, and QVVV…LSTL.

This sequence belongs to the glycosyltransferase 4 family. MraY subfamily. The cofactor is Mg(2+).

Its subcellular location is the cell inner membrane. It carries out the reaction UDP-N-acetyl-alpha-D-muramoyl-L-alanyl-gamma-D-glutamyl-meso-2,6-diaminopimeloyl-D-alanyl-D-alanine + di-trans,octa-cis-undecaprenyl phosphate = di-trans,octa-cis-undecaprenyl diphospho-N-acetyl-alpha-D-muramoyl-L-alanyl-D-glutamyl-meso-2,6-diaminopimeloyl-D-alanyl-D-alanine + UMP. The protein operates within cell wall biogenesis; peptidoglycan biosynthesis. Its function is as follows. Catalyzes the initial step of the lipid cycle reactions in the biosynthesis of the cell wall peptidoglycan: transfers peptidoglycan precursor phospho-MurNAc-pentapeptide from UDP-MurNAc-pentapeptide onto the lipid carrier undecaprenyl phosphate, yielding undecaprenyl-pyrophosphoryl-MurNAc-pentapeptide, known as lipid I. The polypeptide is Phospho-N-acetylmuramoyl-pentapeptide-transferase (Azoarcus sp. (strain BH72)).